The primary structure comprises 356 residues: Acyl-coenzyme A diphosphatase NUDT19 (356 aa).

A Nudix hydrolase domain is found at 10-241; the sequence is AATVMLAAGW…IWLAPPQFYE (232 aa). A disordered region spans residues 72–94; that stretch reads PRFGLGPEPPRQPPFPGLSHGDA. The span at 78-87 shows a compositional bias: pro residues; the sequence is PEPPRQPPFP. Positions 97-118 match the Nudix box motif; it reads AALPDDVALRICAIRETFEEAG. Mg(2+)-binding residues include Glu112 and Glu116. N6-succinyllysine is present on Lys299. The short motif at 354–356 is the Microbody targeting signal element; sequence ARL.

Belongs to the Nudix hydrolase family. As to quaternary structure, monomer. Mg(2+) serves as cofactor. It depends on Mn(2+) as a cofactor.

It is found in the peroxisome. It catalyses the reaction an acyl-CoA + H2O = an acyl-4'-phosphopantetheine + adenosine 3',5'-bisphosphate + 2 H(+). It carries out the reaction CoA + H2O = (R)-4'-phosphopantetheine + adenosine 3',5'-bisphosphate + 2 H(+). The catalysed reaction is hexanoyl-CoA + H2O = hexanoyl-4'-phosphopantetheine + adenosine 3',5'-bisphosphate + 2 H(+). The enzyme catalyses octanoyl-CoA + H2O = S-octanoyl-4'-phosphopantetheine + adenosine 3',5'-bisphosphate + 2 H(+). It catalyses the reaction butanoyl-CoA + H2O = S-butanoyl-4'-phosphopantetheine + adenosine 3',5'-bisphosphate + 2 H(+). It carries out the reaction propanoyl-CoA + H2O = propanoyl-4'-phosphopantetheine + adenosine 3',5'-bisphosphate + 2 H(+). The catalysed reaction is malonyl-CoA + H2O = malonyl-4'-phosphopantetheine + adenosine 3',5'-bisphosphate + 2 H(+). The enzyme catalyses succinyl-CoA + H2O = succinyl-4'-phosphopantetheine + adenosine 3',5'-bisphosphate + 2 H(+). It catalyses the reaction choloyl-CoA + H2O = S-choloyl-4'-phosphopantetheine + adenosine 3',5'-bisphosphate + 2 H(+). It carries out the reaction 4,8-dimethylnonanoyl-CoA + H2O = S-(4,8-dimethylnonanoyl)-4'-phosphopantetheine + adenosine 3',5'-bisphosphate + 2 H(+). The catalysed reaction is (9Z,12Z,15Z)-octadecatrienoyl-CoA + H2O = S-(9Z,12Z,15Z-octadecatrienoyl)-4'-phosphopantetheine + adenosine 3',5'-bisphosphate + 2 H(+). The enzyme catalyses (9Z,12Z)-octadecadienoyl-CoA + H2O = S-(9Z,12Z-octadecadienoyl)-4'-phosphopantetheine + adenosine 3',5'-bisphosphate + 2 H(+). It catalyses the reaction (9Z)-hexadecenoyl-CoA + H2O = S-(9Z-hexadecenoyl)-4'-phosphopantetheine + adenosine 3',5'-bisphosphate + 2 H(+). It carries out the reaction (9Z)-tetradecenoyl-CoA + H2O = S-(9Z-tetradecenoyl)-4'-phosphopantetheine + adenosine 3',5'-bisphosphate + 2 H(+). The catalysed reaction is (6Z)-octenoyl-CoA + H2O = S-(6Z-octenoyl)-4'-phosphopantetheine + adenosine 3',5'-bisphosphate + 2 H(+). The enzyme catalyses hexadecanoyl-CoA + H2O = S-hexadecanoyl-4'-phosphopantetheine + adenosine 3',5'-bisphosphate + 2 H(+). It catalyses the reaction tetradecanoyl-CoA + H2O = tetradecanoyl-4'-phosphopantetheine + adenosine 3',5'-bisphosphate + 2 H(+). It carries out the reaction dodecanoyl-CoA + H2O = S-dodecanoyl-4'-phosphopantetheine + adenosine 3',5'-bisphosphate + 2 H(+). The catalysed reaction is a 5'-end CoA-ribonucleoside in mRNA + H2O = a 5'-end phospho-adenosine-phospho-ribonucleoside in mRNA + (R)-4'-phosphopantetheine + 2 H(+). In terms of biological role, fatty acyl-coenzyme A (CoA) diphosphatase that hydrolyzes fatty acyl-CoA to yield acyl-4'-phosphopantetheine and adenosine 3',5'-bisphosphate. Mediates the hydrolysis of a wide range of CoA esters, including choloyl-CoA and branched-chain fatty-acyl-CoA esters and at low substrate concentrations medium and long-chain fatty-acyl-CoA esters are the primary substrates. Highest activity seen with medium-chain acyl-CoA esters and higher rates of activity seen with the unsaturated acyl-CoA esters compared with the saturated esters. Exhibits decapping activity towards dpCoA-capped RNAs in vitro. The polypeptide is Acyl-coenzyme A diphosphatase NUDT19 (Nudt19) (Mus saxicola (Brown spiny mouse)).